Consider the following 215-residue polypeptide: Glutathione S-transferase stcT (215 aa).

One can recognise a GST N-terminal domain in the interval 2–82 (PFGTLYTRPF…YDSNTTLLGT (81 aa)). Glutathione contacts are provided by K52 and E66. K52 provides a ligand contact to substrate. The region spanning 83 to 211 (TGQEYASIIR…PVLAEYEMPI (129 aa)) is the GST C-terminal domain.

Belongs to the GST superfamily. The cofactor is glutathione.

It participates in mycotoxin biosynthesis; sterigmatocystin biosynthesis. Its function is as follows. Glutathione S-transferase; part of the gene cluster that mediates the biosynthesis of sterigmatocystin (ST), a polyketide-derived furanocoumarin which is part of the most toxic and carcinogenic compounds among the known mycotoxins. The first step in the biosynthesis of sterigmatocystin is the production of hexanoate by the fatty acid synthase (FAS) units stcJ and stcK. The polyketide backbone is assembled by the non-reducing polyketide synthase stcA by condensation of the starter hexanoyl-CoA and 7 malonyl-CoA extender units followed by cyclization and release of norsolorinic acid. Norsolorinic acid is the first stable intermediate in the biosynthesis of sterigmatocystin and is converted into averantin (AVN) by the ketoreductase stcE which reduces the hexanoate ketone to an alcohol. Averantin is then oxidized into 5'-hydroxyaverantin (HAVN) by the cytochrome P450 monooxygenase stcF. 5'-hydroxyaverantin is further converted to 5'-oxyaverantin (OAVN) by the 5'-hydroxyaverantin dehydrogenase stcG. The next step is the conversion of OAVN into averufin (AVF) which is catalyzed by a yet to be identified enzyme. The cytochrome P450 monooxygenase stcB and the flavin-binding monooxygenase stcW are both required for the conversion of averufin to 1-hydroxyversicolorone. The esterase stcI probably catalyzes the formation of versiconal hemiacetal acetate from 1-hydroxyversicolorone. The oxydoreductase stcN then probably catalyzes the biosynthetic step from versiconal to versicolorin B (VERB). The next step is performed by the versicolorin B desaturase stcL to produce versicolorin A (VERA). The ketoreductase stcU and the cytochrome P450 monooxygenase stcS are involved in the conversion of versicolorin A to demethylsterigmatocystin. The Baeyer-Villiger oxidas stcQ and the reductase stcR might be involved in the biosynthetic step from versicolorin A to demethylsterigmatocystin. The final step in the biosynthesis of sterigmatocystin is the methylation of demethylsterigmatocystin catalyzed by the methyltransferase stcP. This Emericella nidulans (strain FGSC A4 / ATCC 38163 / CBS 112.46 / NRRL 194 / M139) (Aspergillus nidulans) protein is Glutathione S-transferase stcT.